The following is a 93-amino-acid chain: Large ribosomal subunit protein eL43 (93 aa).

The C4-type zinc finger occupies 39–60 (CEFCGKYGVKRKAVGIWGCKDC).

The protein belongs to the eukaryotic ribosomal protein eL43 family.

This Brassica rapa subsp. rapa (Turnip) protein is Large ribosomal subunit protein eL43 (RPL37A).